The sequence spans 301 residues: Acetylglutamate kinase (301 aa).

Substrate is bound by residues 68-69 (GG), R90, and N195.

Belongs to the acetylglutamate kinase family. ArgB subfamily.

Its subcellular location is the cytoplasm. It catalyses the reaction N-acetyl-L-glutamate + ATP = N-acetyl-L-glutamyl 5-phosphate + ADP. The protein operates within amino-acid biosynthesis; L-arginine biosynthesis; N(2)-acetyl-L-ornithine from L-glutamate: step 2/4. Functionally, catalyzes the ATP-dependent phosphorylation of N-acetyl-L-glutamate. The protein is Acetylglutamate kinase of Pseudomonas putida (strain W619).